We begin with the raw amino-acid sequence, 304 residues long: Energy-coupling factor transporter ATP-binding protein EcfA2 (304 aa).

The region spanning 11–260 is the ABC transporter domain; that stretch reads LKADEILAVS…QTFLEKTTIV (250 aa). 54-61 serves as a coordination point for ATP; the sequence is GDSGSGKS.

It belongs to the ABC transporter superfamily. Energy-coupling factor EcfA family. As to quaternary structure, forms a stable energy-coupling factor (ECF) transporter complex composed of 2 membrane-embedded substrate-binding proteins (S component), 2 ATP-binding proteins (A component) and 2 transmembrane proteins (T component).

The protein resides in the cell membrane. In terms of biological role, ATP-binding (A) component of a common energy-coupling factor (ECF) ABC-transporter complex. Unlike classic ABC transporters this ECF transporter provides the energy necessary to transport a number of different substrates. The protein is Energy-coupling factor transporter ATP-binding protein EcfA2 of Mycoplasma genitalium (strain ATCC 33530 / DSM 19775 / NCTC 10195 / G37) (Mycoplasmoides genitalium).